A 96-amino-acid chain; its full sequence is SAGA-associated factor 11 (96 aa).

The SGF11-type zinc finger occupies Phe68–Cys89.

Belongs to the SGF11 family. Component of the 1.8 MDa SAGA transcription coactivator-HAT complex. SAGA is built of 5 distinct domains with specialized functions. Within the SAGA complex, SUS1, SGF11, SGF73 and UBP8 form an additional subcomplex of SAGA called the DUB module (deubiquitination module). Interacts directly with SGF73, SUS1 and UBP8.

It is found in the nucleus. Functionally, functions as a component of the transcription regulatory histone acetylation (HAT) complex SAGA. At the promoters, SAGA is required for recruitment of the basal transcription machinery. It influences RNA polymerase II transcriptional activity through different activities such as TBP interaction and promoter selectivity, interaction with transcription activators, and chromatin modification through histone acetylation and deubiquitination. SAGA acetylates nucleosomal histone H3 to some extent (to form H3K9ac, H3K14ac, H3K18ac and H3K23ac). SAGA interacts with DNA via upstream activating sequences (UASs). Involved in transcriptional regulation of a subset of SAGA-regulated genes. Within the SAGA complex, participates in a subcomplex, that specifically deubiquitinates histones H2B. This Vanderwaltozyma polyspora (strain ATCC 22028 / DSM 70294 / BCRC 21397 / CBS 2163 / NBRC 10782 / NRRL Y-8283 / UCD 57-17) (Kluyveromyces polysporus) protein is SAGA-associated factor 11.